Here is an 85-residue protein sequence, read N- to C-terminus: uncharacterized protein (85 aa).

Transmembrane regions (helical) follow at residues 20 to 42 (IYWF…TTFL) and 52 to 69 (IILR…KHYY).

The protein localises to the membrane. This is an uncharacterized protein from Saccharomyces cerevisiae (strain ATCC 204508 / S288c) (Baker's yeast).